The following is a 137-amino-acid chain: Large ribosomal subunit protein uL16 (137 aa).

This sequence belongs to the universal ribosomal protein uL16 family. As to quaternary structure, part of the 50S ribosomal subunit.

Functionally, binds 23S rRNA and is also seen to make contacts with the A and possibly P site tRNAs. The polypeptide is Large ribosomal subunit protein uL16 (Bradyrhizobium sp. (strain BTAi1 / ATCC BAA-1182)).